We begin with the raw amino-acid sequence, 292 residues long: Ribosomal protein L11 methyltransferase (292 aa).

S-adenosyl-L-methionine is bound by residues Thr-144, Gly-165, Asp-187, and Asn-229.

It belongs to the methyltransferase superfamily. PrmA family.

The protein resides in the cytoplasm. It catalyses the reaction L-lysyl-[protein] + 3 S-adenosyl-L-methionine = N(6),N(6),N(6)-trimethyl-L-lysyl-[protein] + 3 S-adenosyl-L-homocysteine + 3 H(+). Methylates ribosomal protein L11. This chain is Ribosomal protein L11 methyltransferase, found in Pseudomonas putida (strain ATCC 47054 / DSM 6125 / CFBP 8728 / NCIMB 11950 / KT2440).